The sequence spans 463 residues: Vacuolar cation/proton exchanger 1 (463 aa).

Residue A2 is modified to N-acetylalanine. Over A2–E68 the chain is Cytoplasmic. Residues S25–T33 form a required for autoinhibitory regulation region. The segment at Y56–F62 is required for interaction with autoinhibitory region. A helical transmembrane segment spans residues V69–T89. The tract at residues I87–Q95 is required for Ca(2+)/H(+) exchange activity. The Extracellular segment spans residues Y90–P96. Residues W97 to L116 traverse the membrane as a helical segment. Over T117–T127 the chain is Cytoplasmic. Residues L128–A148 form a helical membrane-spanning segment. The segment at G137–V172 is cation selection. Topologically, residues L149 to L161 are extracellular. Residues L162 to I182 traverse the membrane as a helical segment. The Cytoplasmic portion of the chain corresponds to A183–D197. The helical transmembrane segment at V198–Y218 threads the bilayer. At L219 to R238 the chain is on the extracellular side. The chain crosses the membrane as a helical span at residues G239–H259. Topologically, residues R260–A281 are cytoplasmic. The helical transmembrane segment at V282–L302 threads the bilayer. Topologically, residues S303–S325 are extracellular. An N-linked (GlcNAc...) asparagine glycan is attached at N318. The chain crosses the membrane as a helical span at residues I326–F346. The segment at G333 to V368 is cation selection. Residues K347 to S360 lie on the Cytoplasmic side of the membrane. The chain crosses the membrane as a helical span at residues A361–I381. Topologically, residues N382–D384 are extracellular. A helical membrane pass occupies residues L385–T405. At L406–S411 the chain is on the cytoplasmic side. Residues H412–V432 traverse the membrane as a helical segment. Residues D433–S463 are Extracellular-facing.

The protein belongs to the Ca(2+):cation antiporter (CaCA) (TC 2.A.19) family. Cation/proton exchanger (CAX) subfamily. As to quaternary structure, interacts with GRXS14 and CXIP4. As to expression, expressed at low levels in leaves, stems and flowers.

Its subcellular location is the vacuole membrane. With respect to regulation, activated by monothiol glutaredoxin GRXS14 and CXIP4. Inhibited by excess of Ca(2+) and Cd(2+), Na(+) and K(+), but not Mn(2+). Its function is as follows. Vacuolar cation/proton exchanger (CAX). Translocates Ca(2+) and other metal ions into vacuoles using the proton gradient formed by H(+)-ATPase and H(+)-pyrophosphatase. Involved in ion homeostasis in association with CAX3. May play a role in cold-acclimation response. The polypeptide is Vacuolar cation/proton exchanger 1 (CAX1) (Arabidopsis thaliana (Mouse-ear cress)).